The sequence spans 329 residues: Probable aryl-alcohol dehydrogenase AAD4 (329 aa).

Tyrosine 30 (proton donor) is an active-site residue. Residue histidine 105 participates in substrate binding. NADP(+) is bound at residue 190–200; sequence DVMGGGRFQSK.

Belongs to the aldo/keto reductase family. Aldo/keto reductase 2 subfamily.

The sequence is that of Probable aryl-alcohol dehydrogenase AAD4 (AAD4) from Saccharomyces cerevisiae (strain ATCC 204508 / S288c) (Baker's yeast).